The primary structure comprises 82 residues: U1-theraphotoxin-Ct1b (82 aa).

Residues Met-1 to Ala-23 form the signal peptide. Positions Glu-24–Arg-44 are excised as a propeptide.

Belongs to the neurotoxin 12 (Hwtx-2) family. 03 (juruin) subfamily. Post-translationally, contains 3 disulfide bonds. Two different connectivities are observed in similar proteins (C1-C3, C2-C5, C4-C6 or C1-C4, C2-C5, C3-C6). As to expression, expressed by the venom gland.

The protein resides in the secreted. Its function is as follows. This toxin causes paralysis and death to sheep blowflies. It does not target insect sodium channels. This chain is U1-theraphotoxin-Ct1b, found in Coremiocnemis tropix (Australian tarantula spider).